Reading from the N-terminus, the 459-residue chain is Argininosuccinate lyase (459 aa).

The protein belongs to the lyase 1 family. Argininosuccinate lyase subfamily.

The protein resides in the cytoplasm. It catalyses the reaction 2-(N(omega)-L-arginino)succinate = fumarate + L-arginine. It participates in amino-acid biosynthesis; L-arginine biosynthesis; L-arginine from L-ornithine and carbamoyl phosphate: step 3/3. In Lactococcus lactis subsp. cremoris (strain MG1363), this protein is Argininosuccinate lyase.